The chain runs to 66 residues: Large ribosomal subunit protein bL35 (66 aa).

Positions 22-41 (VMSAQRGKRHGMIKRTKKQI) are disordered. Basic residues predominate over residues 27-41 (RGKRHGMIKRTKKQI).

The protein belongs to the bacterial ribosomal protein bL35 family.

The chain is Large ribosomal subunit protein bL35 from Rhodopseudomonas palustris (strain TIE-1).